We begin with the raw amino-acid sequence, 257 residues long: Acetylglutamate kinase (257 aa).

Substrate contacts are provided by residues Gly43–Gly44, Arg65, and Asn157. Residues Asp180–Leu185 and Ile208–Thr210 contribute to the ATP site.

It belongs to the acetylglutamate kinase family. ArgB subfamily. As to quaternary structure, homodimer.

The protein localises to the cytoplasm. The catalysed reaction is N-acetyl-L-glutamate + ATP = N-acetyl-L-glutamyl 5-phosphate + ADP. It participates in amino-acid biosynthesis; L-arginine biosynthesis; N(2)-acetyl-L-ornithine from L-glutamate: step 2/4. In terms of biological role, catalyzes the ATP-dependent phosphorylation of N-acetyl-L-glutamate. This is Acetylglutamate kinase from Buchnera aphidicola subsp. Acyrthosiphon pisum (strain 5A).